An 872-amino-acid chain; its full sequence is Leucine--tRNA ligase (872 aa).

Positions 42–52 (PYPSGNLHMGH) match the 'HIGH' region motif. Residues 631–635 (KMSKS) carry the 'KMSKS' region motif. ATP is bound at residue lysine 634.

It belongs to the class-I aminoacyl-tRNA synthetase family.

The protein resides in the cytoplasm. The catalysed reaction is tRNA(Leu) + L-leucine + ATP = L-leucyl-tRNA(Leu) + AMP + diphosphate. The sequence is that of Leucine--tRNA ligase from Blochmanniella pennsylvanica (strain BPEN).